The primary structure comprises 164 residues: Large ribosomal subunit protein eL24 (164 aa).

Disordered stretches follow at residues 63 to 82 (KDAAQEAVKKRRRATKKPYS) and 117 to 164 (ERIK…GGKA). The segment covering 71–81 (KKRRRATKKPY) has biased composition (basic residues). Basic and acidic residues predominate over residues 117–133 (ERIKKTKDEKKAKKAEV).

It belongs to the eukaryotic ribosomal protein eL24 family.

It is found in the cytoplasm. The polypeptide is Large ribosomal subunit protein eL24 (RPL24) (Cicer arietinum (Chickpea)).